The sequence spans 271 residues: Probable ribosomal RNA small subunit methyltransferase A (271 aa).

S-adenosyl-L-methionine contacts are provided by Asn-22, Leu-24, Gly-49, Glu-70, Asp-97, and Asn-112.

The protein belongs to the class I-like SAM-binding methyltransferase superfamily. rRNA adenine N(6)-methyltransferase family. RsmA subfamily.

It is found in the cytoplasm. In terms of biological role, specifically dimethylates two adjacent adenosines in the loop of a conserved hairpin near the 3'-end of 16S rRNA in the 30S particle. May play a critical role in biogenesis of 30S subunits. This is Probable ribosomal RNA small subunit methyltransferase A from Methanosphaera stadtmanae (strain ATCC 43021 / DSM 3091 / JCM 11832 / MCB-3).